A 1022-amino-acid polypeptide reads, in one-letter code: Integrator complex subunit 4 (1022 aa).

Residues Thr-148 and Lys-184 each contribute to the 1D-myo-inositol hexakisphosphate site. Residues 818–840 (KDEEEKPPVVETDMPMKESVSRD) form a disordered region.

Belongs to the Integrator subunit 4 family. In terms of assembly, belongs to the multiprotein complex Integrator, at least composed of IntS1, IntS2, IntS3, IntS4, omd/IntS5, IntS6, defl/IntS7, IntS8, IntS9, IntS10, IntS11, IntS12, asun/IntS13, IntS14 and IntS15. The core complex associates with protein phosphatase 2A subunits mts/PP2A and Pp2A-29B, to form the Integrator-PP2A (INTAC) complex. IntS4 is part of the RNA endonuclease subcomplex, composed of IntS4, IntS9, IntS11 and inositol hexakisphosphate (InsP6).

It is found in the nucleus. In terms of biological role, component of the integrator complex, a multiprotein complex that terminates RNA polymerase II (Pol II) transcription in the promoter-proximal region of genes. The integrator complex provides a quality checkpoint during transcription elongation by driving premature transcription termination of transcripts that are unfavorably configured for transcriptional elongation: the complex terminates transcription by (1) catalyzing dephosphorylation of the C-terminal domain (CTD) of Pol II subunit Polr2A/Rbp1 and Spt5, and (2) degrading the exiting nascent RNA transcript via endonuclease activity. The integrator complex is also involved in the 3'-end processing of the U7 snRNA, and also the spliceosomal snRNAs U1, U2, U4 and U5. In Drosophila melanogaster (Fruit fly), this protein is Integrator complex subunit 4.